The chain runs to 217 residues: Cysteine-rich protein 3 (217 aa).

The 62-residue stretch at 3 to 64 folds into the LIM zinc-binding 1 domain; sequence WTCPRCQQPV…KPCYGALFGP (62 aa). Positions 84-112 are disordered; sequence PGCTTPLSPSSFSPPRPRTGLPQGKKSPP. The 62-residue stretch at 122 to 183 folds into the LIM zinc-binding 2 domain; that stretch reads SLCPGCGEPV…VPCYGYLFGP (62 aa).

Expressed in most tissues, but not in skeletal muscle.

It is found in the cytoplasm. The polypeptide is Cysteine-rich protein 3 (CRIP3) (Homo sapiens (Human)).